A 210-amino-acid polypeptide reads, in one-letter code: Protein GrpE (210 aa).

The disordered stretch occupies residues 1 to 31; it reads MAKDPQTPTDEELARAERDAEPQPGDATDDE. Basic and acidic residues predominate over residues 12 to 21; the sequence is ELARAERDAE.

The protein belongs to the GrpE family. In terms of assembly, homodimer.

Its subcellular location is the cytoplasm. Functionally, participates actively in the response to hyperosmotic and heat shock by preventing the aggregation of stress-denatured proteins, in association with DnaK and GrpE. It is the nucleotide exchange factor for DnaK and may function as a thermosensor. Unfolded proteins bind initially to DnaJ; upon interaction with the DnaJ-bound protein, DnaK hydrolyzes its bound ATP, resulting in the formation of a stable complex. GrpE releases ADP from DnaK; ATP binding to DnaK triggers the release of the substrate protein, thus completing the reaction cycle. Several rounds of ATP-dependent interactions between DnaJ, DnaK and GrpE are required for fully efficient folding. This Chromohalobacter salexigens (strain ATCC BAA-138 / DSM 3043 / CIP 106854 / NCIMB 13768 / 1H11) protein is Protein GrpE.